We begin with the raw amino-acid sequence, 627 residues long: BURP domain-containing protein 12 (627 aa).

Residues Met1–Gly25 form the signal peptide. Residues Asn119, Asn175, Asn251, Asn366, Asn384, and Asn530 are each glycosylated (N-linked (GlcNAc...) asparagine). Residues Phe415–Ala626 form the BURP domain.

In terms of tissue distribution, expressed in stems, leaves, shoot and panicles.

The polypeptide is BURP domain-containing protein 12 (BURP12) (Oryza sativa subsp. japonica (Rice)).